Here is a 212-residue protein sequence, read N- to C-terminus: Probable nicotinate-nucleotide adenylyltransferase (212 aa).

This sequence belongs to the NadD family.

The catalysed reaction is nicotinate beta-D-ribonucleotide + ATP + H(+) = deamido-NAD(+) + diphosphate. Its pathway is cofactor biosynthesis; NAD(+) biosynthesis; deamido-NAD(+) from nicotinate D-ribonucleotide: step 1/1. In terms of biological role, catalyzes the reversible adenylation of nicotinate mononucleotide (NaMN) to nicotinic acid adenine dinucleotide (NaAD). This Methylibium petroleiphilum (strain ATCC BAA-1232 / LMG 22953 / PM1) protein is Probable nicotinate-nucleotide adenylyltransferase.